The sequence spans 1043 residues: Desmoglein-1 (1043 aa).

An N-terminal signal peptide occupies residues 1–23 (MNWPFFRAAVVLFIFLVVLEVNS). A propeptide spanning residues 24-49 (DFRIQVRDYNTKNGTIKWHSLRRQKR) is cleaved from the precursor. Cadherin domains are found at residues 50–158 (EWIK…PVFS), 159–270 (MSTF…PYME), 271–385 (LPTQ…GSVF), and 386–498 (RPGS…VNGS). Residues 50–551 (EWIKFAAACR…PLRDNVHFGP (502 aa)) lie on the Extracellular side of the membrane. N110 and N180 each carry an N-linked (GlcNAc...) asparagine glycan. N496 is a glycosylation site (N-linked (GlcNAc...) asparagine). Residues 552–572 (AGIGLLIMGFLVLGLVPFLLM) form a helical membrane-spanning segment. Over 573–1043 (CCDCGGAPGG…TKYSTVQYTK (471 aa)) the chain is Cytoplasmic. The disordered stretch occupies residues 770–807 (DVEPFPDSDPSWPPKSTEPVCPPQGTEPTGGGHPPISP). Desmoglein repeat repeat units follow at residues 819–845 (TYPS…TVTE), 846–875 (SYTS…ERVV), 876–905 (GPIS…ERVI), 906–933 (APSS…ERVI), and 934–962 (QPTS…ERVV).

As to quaternary structure, binds to JUP/plakoglobin. Interacts with PKP2. Interacts with DSC3; there is evidence to suggest that the interaction promotes cell-cell adhesion of keratinocytes. As to expression, expressed in the epidermis. Expressed in the muzzle epithelium.

Its subcellular location is the cell membrane. The protein localises to the cell junction. The protein resides in the desmosome. It is found in the cytoplasm. It localises to the nucleus. Its function is as follows. Component of intercellular desmosome junctions. Involved in the interaction of plaque proteins and intermediate filaments mediating cell-cell adhesion. The protein is Desmoglein-1 (DSG1) of Bos taurus (Bovine).